The primary structure comprises 281 residues: Large ribosomal subunit protein uL22 (281 aa).

The tract at residues 1–225 is large ribosomal subunit protein uL22; that stretch reads MASPMGSTAS…KAGGAAEAEV (225 aa). 2 disordered regions span residues 137-175 and 199-281; these read RATK…PVAA and AVAS…GGTR. The span at 139 to 153 shows a compositional bias: basic residues; it reads TKKAVPKGARHRRRL. 2 stretches are compositionally biased toward low complexity: residues 159 to 175 and 199 to 239; these read PAAS…PVAA and AVAS…APAA. Residues 226-281 are unknown; the sequence is ATTDEQTTETAPAAEAEKPAVRRPAARKSTTSARRRAAETEGHDSDAESTDEGGTR. The span at 261-271 shows a compositional bias: basic and acidic residues; it reads RAAETEGHDSD. Positions 272–281 are enriched in acidic residues; sequence AESTDEGGTR.

The protein belongs to the universal ribosomal protein uL22 family. In terms of assembly, part of the 50S ribosomal subunit.

In terms of biological role, the globular domain of the protein is located near the polypeptide exit tunnel on the outside of the subunit, while an extended beta-hairpin is found that lines the wall of the exit tunnel in the center of the 70S ribosome. This protein binds specifically to 23S rRNA; its binding is stimulated by other ribosomal proteins, e.g. L4, L17, and L20. It is important during the early stages of 50S assembly. It makes multiple contacts with different domains of the 23S rRNA in the assembled 50S subunit and ribosome. The sequence is that of Large ribosomal subunit protein uL22 from Acidothermus cellulolyticus (strain ATCC 43068 / DSM 8971 / 11B).